We begin with the raw amino-acid sequence, 312 residues long: Aspartoacylase (312 aa).

Positions 20 and 23 each coordinate Zn(2+). The N-acetyl-L-aspartate site is built by arginine 62, asparagine 69, and arginine 70. Residue histidine 115 coordinates Zn(2+). N-acetyl-L-aspartate is bound by residues tyrosine 163 and arginine 167. The active-site Proton donor/acceptor is the glutamate 177. N-acetyl-L-aspartate is bound at residue tyrosine 287.

It belongs to the AspA/AstE family. Aspartoacylase subfamily. As to quaternary structure, homodimer. Requires Zn(2+) as cofactor. Detected in kidney proximal tubule cells (at protein level).

It is found in the cytoplasm. The protein localises to the nucleus. It catalyses the reaction an N-acyl-L-aspartate + H2O = a carboxylate + L-aspartate. It carries out the reaction N-acetyl-L-aspartate + H2O = L-aspartate + acetate. Functionally, catalyzes the deacetylation of N-acetylaspartic acid (NAA) to produce acetate and L-aspartate. NAA occurs in high concentration in brain and its hydrolysis NAA plays a significant part in the maintenance of intact white matter. In other tissues it acts as a scavenger of NAA from body fluids. This is Aspartoacylase from Rattus norvegicus (Rat).